The primary structure comprises 365 residues: Leu/Ile/Val/Thr-binding protein (365 aa).

Positions 1 to 21 (MKGKTLLAGCIALSLSHMAFA) are cleaved as a signal peptide. Cysteine 74 and cysteine 99 are joined by a disulfide.

The protein belongs to the leucine-binding protein family.

It is found in the periplasm. In terms of biological role, this protein is a component of the leucine, isoleucine, valine, threonine transport system, which is one of the two periplasmic binding protein-dependent transport systems of the high-affinity transport of the branched-chain amino acids. This chain is Leu/Ile/Val/Thr-binding protein (livJ), found in Salmonella typhimurium (strain LT2 / SGSC1412 / ATCC 700720).